The chain runs to 512 residues: Glycine betaine transporter OpuD (512 aa).

The next 12 helical transmembrane spans lie at 5–25 (ISSV…WGVI), 45–65 (FGWY…FLIF), 82–102 (FGLL…GLVF), 135–155 (FFHW…CIAY), 186–206 (IDCI…GLGA), 222–242 (AFIV…LSAW), 257–277 (MVLA…VLIM), 312–332 (WTIF…IFIA), 343–363 (FLIG…SIFG), 395–415 (LTMV…ITSA), 441–461 (WGII…LAAL), and 464–484 (TAIL…ASLY).

It belongs to the BCCT transporter (TC 2.A.15) family.

The protein resides in the cell membrane. Activity is stimulated by high osmolarity. Its function is as follows. High-affinity uptake of glycine betaine. Does not mediate either carnitine or choline uptake. In Bacillus subtilis (strain 168), this protein is Glycine betaine transporter OpuD (opuD).